The primary structure comprises 593 residues: Cysteine/serine-rich nuclear protein 1 (593 aa).

3 disordered regions span residues 1–66, 313–392, and 478–497; these read MTGL…RDFC, FREL…GVDD, and REGS…GQSS. Composition is skewed to low complexity over residues 17–46 and 351–372; these read SSVS…VSRA and SCSS…TSGA.

This sequence belongs to the AXUD1 family.

The protein resides in the nucleus. Functionally, binds to the consensus sequence 5'-AGAGTG-3' and has transcriptional activator activity. May have a tumor-suppressor function. May play a role in apoptosis. In Pongo abelii (Sumatran orangutan), this protein is Cysteine/serine-rich nuclear protein 1 (CSRNP1).